Reading from the N-terminus, the 299-residue chain is UDP-N-acetylenolpyruvoylglucosamine reductase (299 aa).

The FAD-binding PCMH-type domain occupies 19–192; that stretch reads LGGQALAEVR…AAVTLQLRRS (174 aa). Arg169 is an active-site residue. Cys221 functions as the Proton donor in the catalytic mechanism. Glu292 is an active-site residue.

It belongs to the MurB family. It depends on FAD as a cofactor.

The protein resides in the cytoplasm. The enzyme catalyses UDP-N-acetyl-alpha-D-muramate + NADP(+) = UDP-N-acetyl-3-O-(1-carboxyvinyl)-alpha-D-glucosamine + NADPH + H(+). It participates in cell wall biogenesis; peptidoglycan biosynthesis. Its function is as follows. Cell wall formation. This Oleidesulfovibrio alaskensis (strain ATCC BAA-1058 / DSM 17464 / G20) (Desulfovibrio alaskensis) protein is UDP-N-acetylenolpyruvoylglucosamine reductase.